The chain runs to 1178 residues: Pyruvate carboxylase, mitochondrial (1178 aa).

The transit peptide at 1 to 20 (MLKFQTVRGGLRLLGVRRSS) directs the protein to the mitochondrion. S21 bears the Phosphoserine mark. An N6-acetyllysine mark is found at K35 and K39. One can recognise a Biotin carboxylation domain in the interval 36-486 (PIKKVMVANR…DTQFIDENPE (451 aa)). Residue K79 is modified to N6-acetyllysine; alternate. At K79 the chain carries N6-succinyllysine; alternate. Residues K148 and K152 each carry the N6-acetyllysine modification. K152 and E236 together coordinate ATP. Residues 156-353 (RAIAIAAGVP…LVHAQIHVSE (198 aa)) enclose the ATP-grasp domain. Position 241 is an N6-acetyllysine (K241). H271 lines the ATP pocket. Residues K297, K316, and K319 each carry the N6-acetyllysine modification. R328 is a catalytic residue. Position 434 is an N6-acetyllysine (K434). N6-succinyllysine is present on K442. Residues 563-832 (LLLMDTTFRD…DTEVPLERVF (270 aa)) form the Pyruvate carboxyltransferase domain. 571–575 (RDAHQ) is a binding site for substrate. Position 572 (D572) interacts with Mn(2+). Position 589 is an N6-acetyllysine (K589). R644 lines the substrate pocket. 2 positions are modified to N6-acetyllysine: K661 and K717. Residue K741 coordinates Mn(2+). Residue K741 is modified to N6-carboxylysine. Position 748 is an N6-acetyllysine (K748). The Mn(2+) site is built by H771 and H773. K892 carries the N6-acetyllysine modification. T908 is a substrate binding site. Residue K969 is modified to N6-acetyllysine. Residue K988 is modified to N6-acetyllysine; alternate. The residue at position 988 (K988) is an N6-succinyllysine; alternate. At K992 the chain carries N6-acetyllysine. T1003 carries the phosphothreonine modification. An N6-acetyllysine mark is found at K1061, K1090, and K1124. A Biotinyl-binding domain is found at 1109–1178 (KGQIGAPMPG…EGDDLILEIE (70 aa)). K1144 bears the N6-biotinyllysine mark.

Homotetramer. Interacts (via the biotin carboxylation domain) with SIRT4. Biotin is required as a cofactor. It depends on Mn(2+) as a cofactor. In terms of processing, acetylation of Lys-316 is observed in liver mitochondria from fasted mice but not from fed mice. Acetylation of Lys-748 might play a role in catalytic activity regulation. As to expression, liver, kidney, adipose tissue, liver and brain.

It is found in the mitochondrion matrix. It catalyses the reaction hydrogencarbonate + pyruvate + ATP = oxaloacetate + ADP + phosphate + H(+). It functions in the pathway carbohydrate biosynthesis; gluconeogenesis. In terms of biological role, pyruvate carboxylase catalyzes a 2-step reaction, involving the ATP-dependent carboxylation of the covalently attached biotin in the first step and the transfer of the carboxyl group to pyruvate in the second. Catalyzes in a tissue specific manner, the initial reactions of glucose (liver, kidney) and lipid (adipose tissue, liver, brain) synthesis from pyruvate. The polypeptide is Pyruvate carboxylase, mitochondrial (Pc) (Mus musculus (Mouse)).